We begin with the raw amino-acid sequence, 435 residues long: Protein SUPPRESSOR OF K(+) TRANSPORT GROWTH DEFECT 1 (435 aa).

The MIT domain occupies 7–72 (EQAIEYVKQA…LRRAEEIRAV (66 aa)). The segment at 73–113 (LDEGGSGPGSNGDAAVATRPKTKPKDGEGGGKDGEDPEQSK) is disordered. The segment covering 95–113 (KPKDGEGGGKDGEDPEQSK) has biased composition (basic and acidic residues). 172–179 (GPPGTGKS) is a binding site for ATP.

The protein belongs to the AAA ATPase family. In terms of assembly, monomer or homodimer (in nucleotide-free form). Decamer, dodecamer or tetradecamer of two stacked respective homooligomeric rings (when bound to ATP); the dodecameric form seems to be predominant. Interacts with members of the ESCRT-III subcomplex such as LIP5, VPS60-1, VPS2.1, VPS20.1, VPS20.2, VPS24-1, VPS32.1, VPS32.2, CHMP1A and VPS24. Binds to PROS/At4g24370. Mostly expressed in leaves, to a lower extent in seeds, and barely in roots and flowers (at protein level). Particularly expressed in trichomes.

Its subcellular location is the cytoplasm. It localises to the nucleus. It is found in the endosome. The protein localises to the multivesicular body membrane. The protein resides in the prevacuolar compartment membrane. It carries out the reaction ATP + H2O = ADP + phosphate + H(+). With respect to regulation, activated by LIP5 and PROS. In terms of biological role, involved in the transport of biosynthetic membrane proteins from the prevacuolar/endosomal compartment to the vacuole. Required for multivesicular body (MVB) protein sorting. Catalyzes the ATP-dependent dissociation of class E VPS proteins from endosomal membranes, such as the disassembly of the ESCRT-III complex. May also regulate cell cycle. Required during seed development for the formation of mucilage in seed coat and testa. Involved in the maintenance of Na(+)/K(+) homeostasis under salt stress. Required for cell expansion. In Arabidopsis thaliana (Mouse-ear cress), this protein is Protein SUPPRESSOR OF K(+) TRANSPORT GROWTH DEFECT 1.